Reading from the N-terminus, the 88-residue chain is Apolipoprotein C-I (88 aa).

Residues 1 to 26 (MRLILSLPVLAVVLAMVLEGPAPAQA) form the signal peptide.

The protein belongs to the apolipoprotein C1 family.

The protein localises to the secreted. Functionally, inhibitor of lipoprotein binding to the low density lipoprotein (LDL) receptor, LDL receptor-related protein, and very low density lipoprotein (VLDL) receptor. Associates with high density lipoproteins (HDL) and the triacylglycerol-rich lipoproteins in the plasma and makes up about 10% of the protein of the VLDL and 2% of that of HDL. Appears to interfere directly with fatty acid uptake and is also the major plasma inhibitor of cholesteryl ester transfer protein (CETP). Binds free fatty acids and reduces their intracellular esterification. Modulates the interaction of APOE with beta-migrating VLDL and inhibits binding of beta-VLDL to the LDL receptor-related protein. This is Apolipoprotein C-I (APOC1) from Cynopterus brachyotis (Lesser short-nosed fruit bat).